The chain runs to 590 residues: uncharacterized protein (590 aa).

Over 1–68 the chain is Cytoplasmic; it reads MKFSKPKFSM…SQRVWGPWNY (68 aa). Residues 69-89 form a helical membrane-spanning segment; the sequence is VAFWLADSVNVNTWMIAGTAV. At 90 to 94 the chain is on the extracellular side; the sequence is ESGLS. The helical transmembrane segment at 95-115 threads the bilayer; it reads WWEAWITVWVGYTIAAFILTI. Residues 116 to 124 are Cytoplasmic-facing; it reads AGRAGAVYH. The chain crosses the membrane as a helical span at residues 125–145; the sequence is ISFPVLSRSSFGIWGSLWPIL. Residues 146–149 lie on the Extracellular side of the membrane; it reads NRAV. A helical membrane pass occupies residues 150–170; it reads MACVWYGVQAWIGGECVTLMI. Over 171–194 the chain is Cytoplasmic; sequence RSIWPSFSHIPNTMAKSGTETYQW. Residues 195–215 traverse the membrane as a helical segment; sequence VGFFIFWLISNVAIWFPVYQI. At 216–218 the chain is on the extracellular side; sequence RHL. A helical membrane pass occupies residues 219 to 239; the sequence is FTAKSFLAPPAAIAFLIWALV. Residues 240–258 lie on the Cytoplasmic side of the membrane; it reads KAHGAGDAIHAKTQLSTWN. A helical transmembrane segment spans residues 259 to 279; the sequence is HGWAVTAGIISCLDNFATLIV. The Extracellular segment spans residues 280–298; sequence NNPDFTRFATTPNAPIFPQ. The chain crosses the membrane as a helical span at residues 299-319; that stretch reads LITIPMGFGITTLIGVLVGSA. The Cytoplasmic segment spans residues 320–390; it reads SKSIYGENIW…LCPMFINIRR (71 aa). Residues 391-411 traverse the membrane as a helical segment; the sequence is GGYIASIIGICMCPWNLLSSS. The Extracellular segment spans residues 412 to 418; that stretch reads NSFANSL. A helical transmembrane segment spans residues 419–439; that stretch reads SAYAVFLSSFAGILIADYFVI. Over 440–467 the chain is Cytoplasmic; the sequence is RKGYLKVDALYTINPNEPYWFTYGINLR. The chain crosses the membrane as a helical span at residues 468 to 488; sequence AFASYICGLLINVVGLAGAVG. The Extracellular portion of the chain corresponds to 489–500; the sequence is DKVPKAALTMNN. Residues 501–521 form a helical membrane-spanning segment; sequence IAYLLGIVTSFLSHLIICKIF. The Cytoplasmic portion of the chain corresponds to 522 to 590; the sequence is PVTACGEKFL…GIDIKESSVF (69 aa). The disordered stretch occupies residues 566 to 590; the sequence is VSYDSKEKSDDGKSGGIDIKESSVF.

This sequence belongs to the purine-cytosine permease (2.A.39) family.

It is found in the cytoplasm. The protein localises to the nucleus. Its subcellular location is the membrane. This is an uncharacterized protein from Schizosaccharomyces pombe (strain 972 / ATCC 24843) (Fission yeast).